The chain runs to 201 residues: Heat shock protein beta-1 (201 aa).

Serine 15 carries the phosphoserine; by PKA and PKC modification. The region spanning 83-193 (ALSRQMSSGM…SETTIPVNVE (111 aa)) is the sHSP domain.

It belongs to the small heat shock protein (HSP20) family. In terms of assembly, homooligomer. Homodimer; becomes monomeric upon activation. Heterooligomer.

It localises to the cytoplasm. The protein resides in the nucleus. Its subcellular location is the cytoskeleton. The protein localises to the spindle. Functionally, small heat shock protein which functions as a molecular chaperone probably maintaining denatured proteins in a folding-competent state. Plays a role in stress resistance and actin organization. The protein is Heat shock protein beta-1 (hspb1) of Poeciliopsis lucida (Desert topminnow).